The chain runs to 618 residues: Manganese lipoxygenase (618 aa).

Residues 1-16 (MRSRILAIVFAARHVA) form the signal peptide. Over residues 36–45 (SSTTVLPSPT) the composition is skewed to low complexity. The disordered stretch occupies residues 36 to 58 (SSTTVLPSPTQYTLPNNDPNQGA). A compositionally biased stretch (polar residues) spans 46–58 (QYTLPNNDPNQGA). One can recognise a Lipoxygenase domain in the interval 47 to 617 (YTLPNNDPNQ…NPAVNPFFLS (571 aa)). 5 N-linked (GlcNAc...) asparagine glycosylation sites follow: asparagine 60, asparagine 91, asparagine 106, asparagine 116, and asparagine 157. The Mn(2+) site is built by histidine 290, histidine 294, histidine 478, and asparagine 482. Asparagine 513 carries N-linked (GlcNAc...) asparagine glycosylation. A Mn(2+)-binding site is contributed by valine 618.

It belongs to the lipoxygenase family. Mn(2+) is required as a cofactor. In terms of processing, N- and O-glycosylated.

Its subcellular location is the secreted. The enzyme catalyses (9Z,12Z)-octadecadienoate + O2 = (11S)-hydroperoxy-(9Z,12Z)-octadecadienoate. It carries out the reaction (9Z,12Z)-octadecadienoate + O2 = (13R)-hydroperoxy-(9Z,11E)-octadecadienoate. It catalyses the reaction (9Z,12Z,15Z)-octadecatrienoate + O2 = (11S)-hydroperoxy-(9Z,12Z,15Z)-octadecatrienoate. The catalysed reaction is (9Z,12Z,15Z)-octadecatrienoate + O2 = (13R)-hydroperoxy-(9Z,11E,15Z)-octadecatrienoate. In terms of biological role, lipoxygenase that metabolizes linoleic and alpha-linolenic acids to 11S- and 13R-hydroperoxy fatty acids. At the end of lipoxygenation, the intermediate product 11S-HPODE from linoleic acid is then transformed into 13R-HPODE as the final product. It also acts on alpha-linolenic acid producing 11S-HPOTrE and 13R-HPOTrE with subsequent transformation of 11S-HPOTrE to 13R-HPOTrE as the final product. Gamma-linolenic acid is a poor substrate. Oleate and arachidonate are not substrates. The sequence is that of Manganese lipoxygenase from Gaeumannomyces tritici (Wheat and barley take-all root rot fungus).